A 377-amino-acid chain; its full sequence is Actin-related protein T2 (377 aa).

The protein belongs to the actin family.

Its subcellular location is the cytoplasm. The protein resides in the cytoskeleton. This is Actin-related protein T2 (ACTRT2) from Macaca fascicularis (Crab-eating macaque).